The chain runs to 293 residues: HTH-type transcriptional regulator HdfR (293 aa).

One can recognise an HTH lysR-type domain in the interval 1–58 (MDTELLKTFLEVSRTRHFGRAAESLYLTQSAVSFRIRQLENQLGANLFTRHRNNIRLT). Positions 18-37 (FGRAAESLYLTQSAVSFRIR) form a DNA-binding region, H-T-H motif.

Belongs to the LysR transcriptional regulatory family.

Functionally, negatively regulates the transcription of the flagellar master operon flhDC by binding to the upstream region of the operon. This is HTH-type transcriptional regulator HdfR from Yersinia enterocolitica serotype O:8 / biotype 1B (strain NCTC 13174 / 8081).